The following is a 312-amino-acid chain: MMIKKNASSEDFFILLGFSNWPQLEVVLFVVILIFYLMTLTGNLFIIILSYVDSHLHTPMYFFLSNLSFLDLCHTTSSIPQLLVNLRGPEKTISYAGCMVQLYFVLALGIAECVLLVVMSYDRYVAVCRPLHYTVLMHPRFCHLLAAASWVIGFTISALHSSFTFWVPLCGHRLVDHFFCEVPALLRLSCVDTHANELTLMVMSSIFVLIPLILILTAYGAIARAVLSMQSTTGLQKVFRTCGAHLMVVSLFFIPVMCMYLQPPSENSPDQGKFIALFYTVVTPSLNPLIYTLRNKHVKGAAKRLLGWEWGK.

Residues 1–26 (MMIKKNASSEDFFILLGFSNWPQLEV) are Extracellular-facing. N-linked (GlcNAc...) asparagine glycosylation occurs at Asn-6. Residues 27 to 50 (VLFVVILIFYLMTLTGNLFIIILS) traverse the membrane as a helical segment. At 51–58 (YVDSHLHT) the chain is on the cytoplasmic side. A helical transmembrane segment spans residues 59–80 (PMYFFLSNLSFLDLCHTTSSIP). At 81–101 (QLLVNLRGPEKTISYAGCMVQ) the chain is on the extracellular side. Cys-98 and Cys-190 are disulfide-bonded. A helical membrane pass occupies residues 102–121 (LYFVLALGIAECVLLVVMSY). Topologically, residues 122-140 (DRYVAVCRPLHYTVLMHPR) are cytoplasmic. Residues 141 to 159 (FCHLLAAASWVIGFTISAL) form a helical membrane-spanning segment. Residues 160–196 (HSSFTFWVPLCGHRLVDHFFCEVPALLRLSCVDTHAN) are Extracellular-facing. Residues 197 to 220 (ELTLMVMSSIFVLIPLILILTAYG) traverse the membrane as a helical segment. The Cytoplasmic portion of the chain corresponds to 221–237 (AIARAVLSMQSTTGLQK). A helical transmembrane segment spans residues 238 to 260 (VFRTCGAHLMVVSLFFIPVMCMY). At 261-273 (LQPPSENSPDQGK) the chain is on the extracellular side. Residues 274–293 (FIALFYTVVTPSLNPLIYTL) traverse the membrane as a helical segment. At 294-312 (RNKHVKGAAKRLLGWEWGK) the chain is on the cytoplasmic side.

The protein belongs to the G-protein coupled receptor 1 family.

It localises to the cell membrane. Its function is as follows. Odorant receptor. This Homo sapiens (Human) protein is Olfactory receptor 2J2 (OR2J2).